Consider the following 201-residue polypeptide: GTP cyclohydrolase 1 (201 aa).

The Zn(2+) site is built by Cys-90, His-93, and Cys-163.

Belongs to the GTP cyclohydrolase I family. In terms of assembly, toroid-shaped homodecamer, composed of two pentamers of five dimers.

The catalysed reaction is GTP + H2O = 7,8-dihydroneopterin 3'-triphosphate + formate + H(+). The protein operates within cofactor biosynthesis; 7,8-dihydroneopterin triphosphate biosynthesis; 7,8-dihydroneopterin triphosphate from GTP: step 1/1. The protein is GTP cyclohydrolase 1 of Streptomyces avermitilis (strain ATCC 31267 / DSM 46492 / JCM 5070 / NBRC 14893 / NCIMB 12804 / NRRL 8165 / MA-4680).